We begin with the raw amino-acid sequence, 509 residues long: 2,3-bisphosphoglycerate-independent phosphoglycerate mutase (509 aa).

Aspartate 11 is a binding site for Mn(2+). Tyrosine 35 carries the post-translational modification Phosphotyrosine. Residue serine 61 coordinates Mn(2+). Serine 61 functions as the Phosphoserine intermediate in the catalytic mechanism. Residues histidine 122, 152 to 153, arginine 184, arginine 190, 260 to 263, and lysine 335 each bind substrate; these read RD and RPDR. Residues aspartate 402, histidine 406, aspartate 443, histidine 444, and histidine 461 each contribute to the Mn(2+) site.

Belongs to the BPG-independent phosphoglycerate mutase family. As to quaternary structure, monomer. Mn(2+) is required as a cofactor.

It carries out the reaction (2R)-2-phosphoglycerate = (2R)-3-phosphoglycerate. It functions in the pathway carbohydrate degradation; glycolysis; pyruvate from D-glyceraldehyde 3-phosphate: step 3/5. Essential for rapid growth and for sporulation. Catalyzes the interconversion of 2-phosphoglycerate and 3-phosphoglycerate. The protein is 2,3-bisphosphoglycerate-independent phosphoglycerate mutase of Bacillus cereus (strain ATCC 10987 / NRS 248).